Consider the following 146-residue polypeptide: Ribonuclease H (146 aa).

Positions 1–143 (MKKQVTIYTD…CDQLAREAIK (143 aa)) constitute an RNase H type-1 domain. Mg(2+)-binding residues include D10, E48, D70, and D135.

Belongs to the RNase H family. In terms of assembly, monomer. Requires Mg(2+) as cofactor.

Its subcellular location is the cytoplasm. It carries out the reaction Endonucleolytic cleavage to 5'-phosphomonoester.. In terms of biological role, endonuclease that specifically degrades the RNA of RNA-DNA hybrids. The chain is Ribonuclease H from Chlorobium chlorochromatii (strain CaD3).